We begin with the raw amino-acid sequence, 25 residues long: FQPSLVLDTAKILLDNYTFPESLMG.

The protein localises to the secreted. It localises to the extracellular space. The protein resides in the extracellular matrix. It is found in the interphotoreceptor matrix. IRBP shuttles 11-cis and all trans retinoids between the retinol isomerase in the pigment epithelium and the visual pigments in the photoreceptor cells of the retina. This chain is Retinol-binding protein 3 (RBP3), found in Sus scrofa (Pig).